A 161-amino-acid chain; its full sequence is Transcriptional repressor NrdR (161 aa).

A zinc finger spans residues 3 to 34; the sequence is CPFCGKYDTKVTDSRLVAEGDQVRRRRQCNDC. The ATP-cone domain maps to 49 to 139; that stretch reads PRVIKGDGSR…VYRRFQDLDE (91 aa).

This sequence belongs to the NrdR family. The cofactor is Zn(2+).

In terms of biological role, negatively regulates transcription of bacterial ribonucleotide reductase nrd genes and operons by binding to NrdR-boxes. The chain is Transcriptional repressor NrdR from Chromohalobacter salexigens (strain ATCC BAA-138 / DSM 3043 / CIP 106854 / NCIMB 13768 / 1H11).